A 489-amino-acid chain; its full sequence is Virion host shutoff protein (489 aa).

Disordered stretches follow at residues 110–135 (EEAS…AFSN), 142–161 (SLAS…PSAA), 285–319 (RSQT…ETRV), and 332–364 (GYED…LTPP). The span at 124 to 134 (ITDSRPSSAFS) shows a compositional bias: polar residues.

The protein belongs to the herpesviridae VHS protein family. Interacts with human EIF4H, EIF4A1 and EIF4A2; interaction with eIF4AI and EIF4A2 presumably allows Vhs protein to associate with the eIF4F cap-binding complex.

It localises to the virion. Minor structural protein that acts as an endoribonuclease during lytic infection. Degrades host mRNAs in the cytoplasm by cutting them at preferred sites, including some in regions of translation initiation. Together with inhibition of host splicing by ICP27, contributes to an overall decrease in host protein synthesis. Also, after the onset of viral transcription, accelerates the turnover of viral mRNA, thereby facilitating the sequential expression of different classes of viral genes. Binds translation initiation factors eIF4H, eIF4AI, and eIF4AII, thereby may interact directly with the translation initiation complex and thus digest specifically mRNAs. Also impedes antigen presentation by major histocompatibility complex class I and class II molecules, inhibits secretion of cytokines that would otherwise recruit lymphocytes and neutrophils cells to the site of infection and blocks the activation of dendritic cells. Plays a role in the inhibition of interferon-beta activation by the cGAS/STING pathway. Mechanistically, down-regulates the expression of host cGAS/MB21D1. Also decreases the accumulation of other interferon-induced mRNAs such as host IFIT3 or CH25H to subvert their antiviral activity. This chain is Virion host shutoff protein (UL41), found in Human herpesvirus 1 (strain 17) (HHV-1).